Reading from the N-terminus, the 200-residue chain is Vacuolar iron transporter homolog 1 (200 aa).

Residues 1–34 lie on the Cytoplasmic side of the membrane; the sequence is MESHNVSNSLNLDMEMDQEKAFDYSKRAQWLRAA. The helical transmembrane segment at 35–55 threads the bilayer; sequence VLGANDGLVSTASLMMGVGAV. Residues 56–62 lie on the Vacuolar side of the membrane; it reads KQDVKVM. The chain crosses the membrane as a helical span at residues 63-83; that stretch reads ILSGFAGLVAGACSMAIGEFV. The Cytoplasmic segment spans residues 84-116; the sequence is SVYSQYDIEVAQMKRENGGQVEKEKLPSPMQAA. The helical transmembrane segment at 117 to 137 threads the bilayer; it reads AASALAFSLGAIVPLMAAAFV. The Vacuolar portion of the chain corresponds to 138-143; sequence KDYHVR. Residues 144 to 164 form a helical membrane-spanning segment; sequence IGAIVAAVTLALVMFGWLGAV. Over 165 to 176 the chain is Cytoplasmic; it reads LGKAPVFKSSAR. The chain crosses the membrane as a helical span at residues 177–197; that stretch reads VLIGGWLAMAVTFGLTKLIGT. Over 198-200 the chain is Vacuolar; that stretch reads HSL.

This sequence belongs to the CCC1 family. As to expression, expressed in the vascular bundles of the shoot and the stele of the root. Expressed in inflorescences and at lower levels in leaves.

The protein localises to the vacuole membrane. It carries out the reaction Fe(2+)(in) = Fe(2+)(out). Its function is as follows. Vacuolar iron transporter involved in the transfer of iron ions from the cytosol to the vacuole for intracellular iron storage. Involved in regulation of cellular iron homeostasis. Vacuolar iron storage is required for seed embryo and seedling development. The sequence is that of Vacuolar iron transporter homolog 1 from Arabidopsis thaliana (Mouse-ear cress).